A 374-amino-acid polypeptide reads, in one-letter code: Ribosomal large subunit pseudouridine synthase D (374 aa).

Positions 1-20 (MQNTSFDNESDYSDDSDFAS) are disordered. A compositionally biased stretch (acidic residues) spans 8–17 (NESDYSDDSD). The S4 RNA-binding domain occupies 39-112 (GRLDAVLAKL…MALDIVYEDD (74 aa)). Aspartate 160 is an active-site residue.

Belongs to the pseudouridine synthase RluA family.

The protein resides in the cytoplasm. The catalysed reaction is uridine(1911/1915/1917) in 23S rRNA = pseudouridine(1911/1915/1917) in 23S rRNA. Responsible for synthesis of pseudouridine from uracil at positions 1911, 1915 and 1917 in 23S ribosomal RNA. The protein is Ribosomal large subunit pseudouridine synthase D (rluD) of Neisseria meningitidis serogroup B (strain ATCC BAA-335 / MC58).